Reading from the N-terminus, the 305-residue chain is Sulfate adenylyltransferase subunit 2 (305 aa).

The protein belongs to the PAPS reductase family. CysD subfamily. In terms of assembly, heterodimer composed of CysD, the smaller subunit, and CysN.

The enzyme catalyses sulfate + ATP + H(+) = adenosine 5'-phosphosulfate + diphosphate. Its pathway is sulfur metabolism; hydrogen sulfide biosynthesis; sulfite from sulfate: step 1/3. With CysN forms the ATP sulfurylase (ATPS) that catalyzes the adenylation of sulfate producing adenosine 5'-phosphosulfate (APS) and diphosphate, the first enzymatic step in sulfur assimilation pathway. APS synthesis involves the formation of a high-energy phosphoric-sulfuric acid anhydride bond driven by GTP hydrolysis by CysN coupled to ATP hydrolysis by CysD. The sequence is that of Sulfate adenylyltransferase subunit 2 from Pseudomonas savastanoi pv. phaseolicola (strain 1448A / Race 6) (Pseudomonas syringae pv. phaseolicola (strain 1448A / Race 6)).